Consider the following 401-residue polypeptide: 8-amino-7-oxononanoate synthase (401 aa).

Arginine 24 is a substrate binding site. 111-112 (GF) contacts pyridoxal 5'-phosphate. Residue histidine 137 coordinates substrate. Residues serine 183, histidine 211, and threonine 240 each contribute to the pyridoxal 5'-phosphate site. At lysine 243 the chain carries N6-(pyridoxal phosphate)lysine. Substrate is bound at residue threonine 357.

This sequence belongs to the class-II pyridoxal-phosphate-dependent aminotransferase family. BioF subfamily. In terms of assembly, homodimer. Pyridoxal 5'-phosphate serves as cofactor.

It carries out the reaction 6-carboxyhexanoyl-[ACP] + L-alanine + H(+) = (8S)-8-amino-7-oxononanoate + holo-[ACP] + CO2. It functions in the pathway cofactor biosynthesis; biotin biosynthesis. In terms of biological role, catalyzes the decarboxylative condensation of pimeloyl-[acyl-carrier protein] and L-alanine to produce 8-amino-7-oxononanoate (AON), [acyl-carrier protein], and carbon dioxide. The chain is 8-amino-7-oxononanoate synthase from Xylella fastidiosa (strain M23).